The primary structure comprises 61 residues: Small ribosomal subunit protein uS14 (61 aa).

Residues cysteine 24, cysteine 27, cysteine 40, and cysteine 43 each coordinate Zn(2+).

The protein belongs to the universal ribosomal protein uS14 family. Zinc-binding uS14 subfamily. As to quaternary structure, part of the 30S ribosomal subunit. Contacts proteins S3 and S10. The cofactor is Zn(2+).

Binds 16S rRNA, required for the assembly of 30S particles and may also be responsible for determining the conformation of the 16S rRNA at the A site. The polypeptide is Small ribosomal subunit protein uS14 (Desulfotalea psychrophila (strain LSv54 / DSM 12343)).